The chain runs to 243 residues: Ubiquinone/menaquinone biosynthesis C-methyltransferase UbiE (243 aa).

S-adenosyl-L-methionine-binding positions include Thr69, Asp90, and 116–117; that span reads DA.

It belongs to the class I-like SAM-binding methyltransferase superfamily. MenG/UbiE family.

It catalyses the reaction a 2-demethylmenaquinol + S-adenosyl-L-methionine = a menaquinol + S-adenosyl-L-homocysteine + H(+). The enzyme catalyses a 2-methoxy-6-(all-trans-polyprenyl)benzene-1,4-diol + S-adenosyl-L-methionine = a 5-methoxy-2-methyl-3-(all-trans-polyprenyl)benzene-1,4-diol + S-adenosyl-L-homocysteine + H(+). The protein operates within quinol/quinone metabolism; menaquinone biosynthesis; menaquinol from 1,4-dihydroxy-2-naphthoate: step 2/2. Its pathway is cofactor biosynthesis; ubiquinone biosynthesis. Methyltransferase required for the conversion of demethylmenaquinol (DMKH2) to menaquinol (MKH2) and the conversion of 2-polyprenyl-6-methoxy-1,4-benzoquinol (DDMQH2) to 2-polyprenyl-3-methyl-6-methoxy-1,4-benzoquinol (DMQH2). This chain is Ubiquinone/menaquinone biosynthesis C-methyltransferase UbiE, found in Ralstonia pickettii (strain 12J).